A 152-amino-acid polypeptide reads, in one-letter code: MSTINSDTSEAMPHISVNAQYIKDLSLENPSAPSSLAALDQRPQIDLSLDINITNLSDENFYEVELNIEAIARNEKYKLFQIELKYAGVFNLINIDSEQHPILLSVHCPAMIFPFARKIIASCTQDAGFQPLMIDPIDFGALYHKKMSEHQN.

The protein belongs to the SecB family. As to quaternary structure, homotetramer, a dimer of dimers. One homotetramer interacts with 1 SecA dimer.

It localises to the cytoplasm. Its function is as follows. One of the proteins required for the normal export of preproteins out of the cell cytoplasm. It is a molecular chaperone that binds to a subset of precursor proteins, maintaining them in a translocation-competent state. It also specifically binds to its receptor SecA. The sequence is that of Protein-export protein SecB from Rickettsia typhi (strain ATCC VR-144 / Wilmington).